The following is a 324-amino-acid chain: Calpain-2 catalytic subunit (324 aa).

The segment at 1 to 138 (YPNTFWMNPQ…KKADYQVVDD (138 aa)) is domain III. Positions 139-153 (EIEADLEENDASEDD) are linker. The domain IV stretch occupies residues 158–324 (FRRLFAQLAG…LISWLCFSVL (167 aa)). 16 residues coordinate Ca(2+): Ala-166, Asp-169, Glu-171, Glu-176, Asp-209, Asp-211, Ser-213, Lys-215, Glu-220, Asp-239, Asp-241, Ser-243, Thr-245, Glu-250, Asp-282, and Asn-285. 2 EF-hand domains span residues 190–224 (DIKS…FYIL) and 226–261 (TKIQ…AGFK).

This sequence belongs to the peptidase C2 family. Forms a heterodimer with a small (regulatory) subunit (CAPNS1). Interacts with CPEB3; this leads to cleavage of CPEB3. It depends on Ca(2+) as a cofactor. Ubiquitous.

It is found in the cytoplasm. Its subcellular location is the cell membrane. The enzyme catalyses Broad endopeptidase specificity.. Activated by 200-1000 micromolar concentrations of calcium and inhibited by calpastatin. Functionally, calcium-regulated non-lysosomal thiol-protease which catalyzes limited proteolysis of substrates involved in cytoskeletal remodeling and signal transduction. Proteolytically cleaves MYOC at 'Arg-226'. Proteolytically cleaves CPEB3 following neuronal stimulation which abolishes CPEB3 translational repressor activity, leading to translation of CPEB3 target mRNAs. This is Calpain-2 catalytic subunit (CAPN2) from Sus scrofa (Pig).